We begin with the raw amino-acid sequence, 331 residues long: Lipoyl synthase (331 aa).

The interval 1-20 (MTTETNPAVTPAYNPSEKQK) is disordered. [4Fe-4S] cluster-binding residues include Cys71, Cys76, Cys82, Cys97, Cys101, Cys104, and Ser311. Positions 82 to 300 (CFGKGTATFM…EEEAYKMGFA (219 aa)) constitute a Radical SAM core domain.

This sequence belongs to the radical SAM superfamily. Lipoyl synthase family. It depends on [4Fe-4S] cluster as a cofactor.

It localises to the cytoplasm. It carries out the reaction [[Fe-S] cluster scaffold protein carrying a second [4Fe-4S](2+) cluster] + N(6)-octanoyl-L-lysyl-[protein] + 2 oxidized [2Fe-2S]-[ferredoxin] + 2 S-adenosyl-L-methionine + 4 H(+) = [[Fe-S] cluster scaffold protein] + N(6)-[(R)-dihydrolipoyl]-L-lysyl-[protein] + 4 Fe(3+) + 2 hydrogen sulfide + 2 5'-deoxyadenosine + 2 L-methionine + 2 reduced [2Fe-2S]-[ferredoxin]. The protein operates within protein modification; protein lipoylation via endogenous pathway; protein N(6)-(lipoyl)lysine from octanoyl-[acyl-carrier-protein]: step 2/2. In terms of biological role, catalyzes the radical-mediated insertion of two sulfur atoms into the C-6 and C-8 positions of the octanoyl moiety bound to the lipoyl domains of lipoate-dependent enzymes, thereby converting the octanoylated domains into lipoylated derivatives. The protein is Lipoyl synthase of Janthinobacterium sp. (strain Marseille) (Minibacterium massiliensis).